We begin with the raw amino-acid sequence, 349 residues long: Tribbles homolog 3 (349 aa).

The interval 1 to 122 is interaction with DDIT3/CHOP; sequence MRATSLAASA…QHVARPTEVL (122 aa). The segment at 35–57 is disordered; sequence VRDEPEPGPTPSLPPASDLSPAV. In terms of domain architecture, Protein kinase spans 63-310; the sequence is LGPYILLERE…ALGILLHPWL (248 aa). Residues 317–349 form a disordered region; sequence VSPPRSDRREMDQVVPDGPQLEEAEEGEVGLYG. Residues 336 to 349 show a composition bias toward acidic residues; sequence QLEEAEEGEVGLYG.

This sequence belongs to the protein kinase superfamily. CAMK Ser/Thr protein kinase family. Tribbles subfamily. In terms of assembly, interacts with AKT1, AKT2, MAP2K1 and MAP2K7. Interacts with ATF4. Interacts with DDIT3/CHOP and inhibits its interaction with EP300/P300. Interacts with APOBEC3C. Interacts (via N-terminus) with APOBEC3A. Interacts with RELA. In terms of tissue distribution, detected only in the lung. Not detected in the heart, brain, spleen, liver, skeletal muscle, kidney and testis.

The protein localises to the nucleus. Functionally, inactive protein kinase which acts as a regulator of the integrated stress response (ISR), a process for adaptation to various stress. Inhibits the transcriptional activity of DDIT3/CHOP and is involved in DDIT3/CHOP-dependent cell death during ER stress. May play a role in programmed neuronal cell death but does not appear to affect non-neuronal cells. Acts as a negative feedback regulator of the ATF4-dependent transcription during the ISR: while TRIB3 expression is promoted by ATF4, TRIB3 protein interacts with ATF4 and inhibits ATF4 transcription activity. Disrupts insulin signaling by binding directly to Akt kinases and blocking their activation. May bind directly to and mask the 'Thr-308' phosphorylation site in AKT1. Interacts with the NF-kappa-B transactivator p65 RELA and inhibits its phosphorylation and thus its transcriptional activation activity. Interacts with MAPK kinases and regulates activation of MAP kinases. Can inhibit APOBEC3A editing of nuclear DNA. This Rattus norvegicus (Rat) protein is Tribbles homolog 3 (Trib3).